A 1439-amino-acid chain; its full sequence is Microtubule organization protein AKNA (1439 aa).

Composition is skewed to basic and acidic residues over residues 1–10 (MASSETEIRW) and 25–35 (AWAEDKRDVDR). The interval 1 to 394 (MASSETEIRW…NRKPQAPARP (394 aa)) is disordered. Residue Ser52 is modified to Phosphoserine. The span at 71 to 83 (WDPHPQPDGHQDS) shows a compositional bias: basic and acidic residues. Residues 89 to 99 (SGEEAEAEDVD) are compositionally biased toward acidic residues. Positions 263-275 (QDSSAPPAQSPQH) are enriched in polar residues. Residues 276-285 (ATDRWRRETT) are compositionally biased toward basic and acidic residues. Residues Ser316, Ser499, and Ser534 each carry the phosphoserine modification. Disordered stretches follow at residues 507 to 562 (SAEW…SAEQ) and 659 to 682 (IDQT…PALP). Residues 533-544 (LSPSSLTSMPTL) show a composition bias toward low complexity. 2 positions are modified to phosphoserine: Ser767 and Ser770. The interval 771-804 (LPEAMRMEEEEEGEEEEEEEGGGDSLEVDGVAAT) is PEST. Disordered stretches follow at residues 775-942 (MRME…QTPE) and 977-1005 (IPRR…LRQR). Acidic residues predominate over residues 778–792 (EEEEEGEEEEEEEGG). Ser848 is modified (phosphoserine). Over residues 865 to 875 (PPGPGVPPHPP) the composition is skewed to pro residues. Composition is skewed to polar residues over residues 879-891 (SAAS…TSLE), 929-940 (SETSRVSPLTQT), and 983-999 (EPST…SSPS). Ser886 carries the post-translational modification Phosphoserine. The segment at 911 to 932 (HLEETWMASPETDSGFVGSETS) is PEST. Phosphoserine occurs at positions 997 and 1010. The segment at 1095–1165 (LHQPLQGSPT…RARSSSVPRE (71 aa)) is disordered. Residues 1115–1123 (RTRGRPADS) constitute a DNA-binding region (a.T hook). A compositionally biased stretch (basic and acidic residues) spans 1135–1147 (STERLPGEPRGEE). Ser1172 and Ser1173 each carry phosphoserine. The interval 1180-1211 (LPLFSEKSKTTKDSPQAARDGKRGVGSAGWPD) is disordered. At Ser1228 the chain carries Phosphoserine. Positions 1252-1329 (AGGAVTGDPL…RPPPGLWYLA (78 aa)) are disordered. Residues 1303-1317 (SSTPSPKQRSKQAGS) are compositionally biased toward polar residues. Residues Ser1377, Ser1387, and Ser1424 each carry the phosphoserine modification.

It belongs to the AKNA family. In terms of assembly, interacts with DCTN1. Interacts with MAPRE1/EB1. Interacts with ODF2. Interacts with CAMSAP3. Phosphorylated; phosphorylation regulates dissociation from and reassembly at the centrosome. As to expression, predominantly expressed by lymphoid tissues. Highly expressed in the spleen, lymph nodes and peripheral blood leukocytes, expressed at lower level in the thymus. Mainly expressed by germinal center B-lymphocytes, a stage in which receptor and ligand interactions are crucial for B-lymphocyte maturation. Expressed by B- and T-lymphocytes, Natural killer cells and CD1a(+)CD14(-) but not CD1a(-)CD14(+) dendritic cells. Weakly or not expressed in fetal liver and in adult bone marrow.

Its subcellular location is the cytoplasm. The protein localises to the cytoskeleton. It is found in the microtubule organizing center. The protein resides in the centrosome. It localises to the centriole. Its subcellular location is the nucleus. In terms of biological role, centrosomal protein that plays a key role in cell delamination by regulating microtubule organization. Required for the delamination and retention of neural stem cells from the subventricular zone during neurogenesis. Also regulates the epithelial-to-mesenchymal transition in other epithelial cells. Acts by increasing centrosomal microtubule nucleation and recruiting nucleation factors and minus-end stabilizers, thereby destabilizing microtubules at the adherens junctions and mediating constriction of the apical endfoot. In addition, may also act as a transcription factor that specifically activates the expression of the CD40 receptor and its ligand CD40L/CD154, two cell surface molecules on lymphocytes that are critical for antigen-dependent-B-cell development. Binds to A/T-rich promoters. It is unclear how it can both act as a microtubule organizer and as a transcription factor; additional evidences are required to reconcile these two apparently contradictory functions. This chain is Microtubule organization protein AKNA, found in Homo sapiens (Human).